The following is an 859-amino-acid chain: Protein O-mannosyl-transferase Tmtc1 (859 aa).

At 1–22 (MHTPKCRRPSMSATLSHKDLAG) the chain is on the cytoplasmic side. Residues 23–43 (LAGCSALAFVLYLNTLNAGFV) form a helical membrane-spanning segment. Over 44–103 (YDDRRAILANGDVTGARPLANLLRNDFWGTPLVDSGSHGSWRPLCVLSFRLNYLAGGMTP) the chain is Extracellular. The helical transmembrane segment at 104–124 (LGYHLVNVMLHCVATWLVFLV) threads the bilayer. Residues 125–134 (ARTLLPSRMG) lie on the Cytoplasmic side of the membrane. Transmembrane regions (helical) follow at residues 135 to 154 (VLAAGALFAVHPAHTEAVAG) and 155 to 174 (LVGRADLASCVCYLLAYLSY). At 175–189 (RRHMLNREWGSLILT) the chain is on the cytoplasmic side. Residues 190-210 (IMLALAALLCKETAITALLLC) form a helical membrane-spanning segment. Over 211 to 245 (GLCDVLSPVGRENSDKVCDGSISGLASFNFQRRFR) the chain is Extracellular. A helical transmembrane segment spans residues 246 to 266 (SLSILGFTLLCGLYCRLSLLP). Residues 267–288 (RPSTAFSAADNPTAHESCFWTR) lie on the Cytoplasmic side of the membrane. The helical transmembrane segment at 289–309 (TLTFLYLPVANFGILLWPQEL) threads the bilayer. Residues 310–328 (SFDWGMEAVSRIRTLWDAR) are Extracellular-facing. Residues 329 to 349 (NILTAGFYGSLVAILWKGSGL) form a helical membrane-spanning segment. Topologically, residues 350 to 422 (RSAASPMDFA…SWTAAPILGT (73 aa)) are cytoplasmic. A helical membrane pass occupies residues 423–443 (AFLVLPFLPASNLLFYVGFVM). At 444–446 (AER) the chain is on the extracellular side. Residues 447-467 (VLYLPSVGYCLLFGLGFGHLW) traverse the membrane as a helical segment. The Cytoplasmic segment spans residues 468 to 473 (QRVNSS). A helical transmembrane segment spans residues 474 to 493 (WRSRLMLLCGLALLLGVHGV). Residues 494-859 (RTFRRNLDWR…RMNVHKHENE (366 aa)) lie on the Extracellular side of the membrane. 9 TPR repeats span residues 518-551 (PKALGNLGSVLSAQGRYEEAELTLRMTLGHRPTM), 552-585 (ADAHFNLGVVHQKQLNFSSAIPCFRRAIELRPQL), 586-620 (AVAYLNLGTSLISLGDHRQEAISVLRTGARLEGSG), 632-665 (YTCYLQLSVLYRSDGRLQDAAAALRESLKALPLL), 671-704 (AVLHLRLGEILAELQDWNEAEHQQRLAMQLQPEQ), 705-739 (GAAYVTYGQTLARNGSRLAEAESWFKRALQLAPLE), 740-773 (PSSHHHYADFLEQQERHHEALGLRLRAAALAPQD), 774-807 (YTLQSCVADALRLLNRLAEAELWYRKAVTLQPMA), and 808-841 (AHAHANLGAILQMRGLRKEAVACYHKALELQPGH). Asparagine 567 is a glycosylation site (N-linked (GlcNAc...) asparagine). Residue asparagine 718 is glycosylated (N-linked (GlcNAc...) asparagine).

It belongs to the TMTC family.

The protein localises to the membrane. Its subcellular location is the endoplasmic reticulum. The catalysed reaction is a di-trans,poly-cis-dolichyl beta-D-mannosyl phosphate + L-seryl-[protein] = 3-O-(alpha-D-mannosyl)-L-seryl-[protein] + a di-trans,poly-cis-dolichyl phosphate + H(+). It carries out the reaction a di-trans,poly-cis-dolichyl beta-D-mannosyl phosphate + L-threonyl-[protein] = 3-O-(alpha-D-mannosyl)-L-threonyl-[protein] + a di-trans,poly-cis-dolichyl phosphate + H(+). Its pathway is protein modification; protein glycosylation. In terms of biological role, transfers mannosyl residues to the hydroxyl group of serine or threonine residues. This is Protein O-mannosyl-transferase Tmtc1 from Drosophila melanogaster (Fruit fly).